Here is a 795-residue protein sequence, read N- to C-terminus: Protein espinas (795 aa).

Residues 30 to 96 (GTGLTFPPHR…FVSPLQRRHC (67 aa)) are disordered. Positions 52–66 (ASMSSNVASTATSSN) are enriched in low complexity. A PET domain is found at 135 to 243 (LDFQRNSQSD…AVRLLSDERP (109 aa)). 3 consecutive LIM zinc-binding domains span residues 242–306 (RPCK…ETQK), 307–367 (PRCS…MFAE), and 368–430 (YCDY…GEPP). Disordered regions lie at residues 427–487 (GEPP…GSAG) and 616–684 (NRNT…EMQI). 2 stretches are compositionally biased toward basic and acidic residues: residues 459-471 (RSGD…ESSR) and 637-649 (LDNR…RFHS). Polar residues predominate over residues 650-662 (VQDTMSRSKSYTD). A compositionally biased stretch (basic residues) spans 666 to 675 (ARRRRRRRNQ).

It belongs to the prickle / espinas / testin family.

The chain is Protein espinas from Drosophila pseudoobscura pseudoobscura (Fruit fly).